Here is a 277-residue protein sequence, read N- to C-terminus: Glutamate racemase (277 aa).

Residues 25–26 (DS) and 57–58 (YG) each bind substrate. Cys-89 (proton donor/acceptor) is an active-site residue. 90-91 (NT) contacts substrate. Cys-204 serves as the catalytic Proton donor/acceptor. Position 205-206 (205-206 (TH)) interacts with substrate.

The protein belongs to the aspartate/glutamate racemases family.

It carries out the reaction L-glutamate = D-glutamate. It participates in cell wall biogenesis; peptidoglycan biosynthesis. Provides the (R)-glutamate required for cell wall biosynthesis. The sequence is that of Glutamate racemase from Brucella abortus (strain 2308).